The primary structure comprises 92 residues: Acylphosphatase (92 aa).

The 86-residue stretch at 5-90 (TYRLVICGLV…GDFVGFQLRE (86 aa)) folds into the Acylphosphatase-like domain. Active-site residues include Arg20 and Asn38.

Belongs to the acylphosphatase family.

It carries out the reaction an acyl phosphate + H2O = a carboxylate + phosphate + H(+). This Albidiferax ferrireducens (strain ATCC BAA-621 / DSM 15236 / T118) (Rhodoferax ferrireducens) protein is Acylphosphatase (acyP).